We begin with the raw amino-acid sequence, 570 residues long: Membrane protein insertase YidC (570 aa).

Over residues glutamine 31–glutamate 60 the composition is skewed to polar residues. Residues glutamine 31 to serine 79 form a disordered region. 5 helical membrane passes run proline 230–glutamate 250, tryptophan 378–alanine 398, leucine 444–leucine 464, proline 487–proline 507, and proline 522–valine 542.

It belongs to the OXA1/ALB3/YidC family. Type 1 subfamily. As to quaternary structure, interacts with the Sec translocase complex via SecD. Specifically interacts with transmembrane segments of nascent integral membrane proteins during membrane integration.

The protein localises to the cell inner membrane. Functionally, required for the insertion and/or proper folding and/or complex formation of integral membrane proteins into the membrane. Involved in integration of membrane proteins that insert both dependently and independently of the Sec translocase complex, as well as at least some lipoproteins. Aids folding of multispanning membrane proteins. The sequence is that of Membrane protein insertase YidC from Hahella chejuensis (strain KCTC 2396).